Reading from the N-terminus, the 151-residue chain is Deoxyuridine 5'-triphosphate nucleotidohydrolase (151 aa).

Substrate-binding positions include 70–72 (RSG), N83, 87–89 (LID), and M97.

Belongs to the dUTPase family. In terms of assembly, homotrimer. Requires Mg(2+) as cofactor.

The enzyme catalyses dUTP + H2O = dUMP + diphosphate + H(+). It participates in pyrimidine metabolism; dUMP biosynthesis; dUMP from dCTP (dUTP route): step 2/2. This enzyme is involved in nucleotide metabolism: it produces dUMP, the immediate precursor of thymidine nucleotides and it decreases the intracellular concentration of dUTP so that uracil cannot be incorporated into DNA. The polypeptide is Deoxyuridine 5'-triphosphate nucleotidohydrolase (Escherichia coli (strain K12 / MC4100 / BW2952)).